We begin with the raw amino-acid sequence, 1134 residues long: Translation initiation factor IF-2 (1134 aa).

Disordered stretches follow at residues 55-465 and 491-524; these read AQKS…HIIG and LARP…QRQR. Polar residues-rich tracts occupy residues 56 to 65, 83 to 105, 137 to 147, 208 to 234, and 251 to 264; these read QKSSNSSSPP, SPPT…SSLK, PSISKNNSLKV, QIKQ…IQTN, and VQSQ…NNNL. 2 stretches are compositionally biased toward basic and acidic residues: residues 391 to 403 and 438 to 450; these read KRGD…KKDG and PDWD…EALR. 2 stretches are compositionally biased toward basic residues: residues 495-504 and 511-524; these read GKPKASKKSG and LRKR…QRQR. The 173-residue stretch at 626–798 folds into the tr-type G domain; that stretch reads RRPPVVTVMG…ILLVTEVEDL (173 aa). The G1 stretch occupies residues 635-642; sequence GHVDHGKT. 635 to 642 contacts GTP; that stretch reads GHVDHGKT. Positions 660–664 are G2; it reads GITQH. Positions 685–688 are G3; sequence DTPG. Residues 685 to 689 and 739 to 742 contribute to the GTP site; these read DTPGH and NKID. The interval 739–742 is G4; sequence NKID. Residues 775–777 are G5; that stretch reads SAI.

Belongs to the TRAFAC class translation factor GTPase superfamily. Classic translation factor GTPase family. IF-2 subfamily.

The protein resides in the cytoplasm. In terms of biological role, one of the essential components for the initiation of protein synthesis. Protects formylmethionyl-tRNA from spontaneous hydrolysis and promotes its binding to the 30S ribosomal subunits. Also involved in the hydrolysis of GTP during the formation of the 70S ribosomal complex. The polypeptide is Translation initiation factor IF-2 (Prochlorococcus marinus (strain SARG / CCMP1375 / SS120)).